The chain runs to 247 residues: UDP-2,3-diacylglucosamine hydrolase (247 aa).

Mn(2+) is bound by residues D8, H10, D41, N79, and H114. Position 79-80 (79-80 (NR)) interacts with substrate. Residues D122, S160, D171, R174, and H202 each contribute to the substrate site. Positions 202 and 204 each coordinate Mn(2+).

This sequence belongs to the LpxH family. The cofactor is Mn(2+).

Its subcellular location is the cell inner membrane. The catalysed reaction is UDP-2-N,3-O-bis[(3R)-3-hydroxytetradecanoyl]-alpha-D-glucosamine + H2O = 2-N,3-O-bis[(3R)-3-hydroxytetradecanoyl]-alpha-D-glucosaminyl 1-phosphate + UMP + 2 H(+). The protein operates within glycolipid biosynthesis; lipid IV(A) biosynthesis; lipid IV(A) from (3R)-3-hydroxytetradecanoyl-[acyl-carrier-protein] and UDP-N-acetyl-alpha-D-glucosamine: step 4/6. Functionally, hydrolyzes the pyrophosphate bond of UDP-2,3-diacylglucosamine to yield 2,3-diacylglucosamine 1-phosphate (lipid X) and UMP by catalyzing the attack of water at the alpha-P atom. Involved in the biosynthesis of lipid A, a phosphorylated glycolipid that anchors the lipopolysaccharide to the outer membrane of the cell. The chain is UDP-2,3-diacylglucosamine hydrolase from Xanthomonas axonopodis pv. citri (strain 306).